The chain runs to 229 residues: MLGWGMDMSKSVMLCCLLSVQPCYAGYVFVSPKLGVYGEALGGPDTVGKAVKQADGTKIAPKIWYYAPRTPLFGVDIGYQADNGLLFRVNLDAALTRLMFRSQCVVGYSLRFGWGGGYVSIASGIECSATVDDAQYEPYTKNEQGTTVASNTVFPCTVLEALVRDPALTADYLLYGMQSCYAIPLHVGVSYYLAKRWGIECALTASLGISMRTDVRVPYAVRIGPVFRV.

This sequence to T.pallidum TP_0315, TP_0618 and TP_0619.

This is an uncharacterized protein from Treponema pallidum (strain Nichols).